The primary structure comprises 279 residues: Oxygen-dependent coproporphyrinogen-III oxidase (279 aa).

Serine 102 serves as a coordination point for substrate. Residues histidine 106 and histidine 116 each contribute to the a divalent metal cation site. Histidine 116 serves as the catalytic Proton donor. Residue 118-120 (NTR) coordinates substrate. Residues histidine 149 and histidine 179 each coordinate a divalent metal cation. The interval 244–279 (YVEFNLLYDRGTKFGLMTDGNVEAILMSLPPEVKWA) is important for dimerization.

The protein belongs to the aerobic coproporphyrinogen-III oxidase family. As to quaternary structure, homodimer. A divalent metal cation serves as cofactor.

It is found in the cytoplasm. It catalyses the reaction coproporphyrinogen III + O2 + 2 H(+) = protoporphyrinogen IX + 2 CO2 + 2 H2O. The protein operates within porphyrin-containing compound metabolism; protoporphyrin-IX biosynthesis; protoporphyrinogen-IX from coproporphyrinogen-III (O2 route): step 1/1. Functionally, involved in the heme biosynthesis. Catalyzes the aerobic oxidative decarboxylation of propionate groups of rings A and B of coproporphyrinogen-III to yield the vinyl groups in protoporphyrinogen-IX. The chain is Oxygen-dependent coproporphyrinogen-III oxidase from Rickettsia bellii (strain RML369-C).